The following is a 105-amino-acid chain: Cell division protein FtsB (105 aa).

Topologically, residues 1-3 (MGK) are cytoplasmic. A helical membrane pass occupies residues 4–21 (LTLLLLALLVWLQYSLWF). At 22–105 (GKNGLHDYTR…QASGQQQNNR (84 aa)) the chain is on the periplasmic side. Residues 33–62 (NDDVTAQQATNAKLKARNDQLFAEIDDLNG) adopt a coiled-coil conformation.

It belongs to the FtsB family. Part of a complex composed of FtsB, FtsL and FtsQ.

The protein localises to the cell inner membrane. Essential cell division protein. May link together the upstream cell division proteins, which are predominantly cytoplasmic, with the downstream cell division proteins, which are predominantly periplasmic. This Klebsiella aerogenes (Enterobacter aerogenes) protein is Cell division protein FtsB.